Consider the following 164-residue polypeptide: Phosphopantetheine adenylyltransferase (164 aa).

Thr-9 is a substrate binding site. ATP-binding positions include 9 to 10 and His-17; that span reads TF. Substrate is bound by residues Lys-41, Leu-78, and Arg-92. ATP-binding positions include 93–95, Glu-103, and 128–134; these read GLR and RQAIASK.

It belongs to the bacterial CoaD family. As to quaternary structure, homohexamer. It depends on Mg(2+) as a cofactor.

Its subcellular location is the cytoplasm. The enzyme catalyses (R)-4'-phosphopantetheine + ATP + H(+) = 3'-dephospho-CoA + diphosphate. It functions in the pathway cofactor biosynthesis; coenzyme A biosynthesis; CoA from (R)-pantothenate: step 4/5. Its function is as follows. Reversibly transfers an adenylyl group from ATP to 4'-phosphopantetheine, yielding dephospho-CoA (dPCoA) and pyrophosphate. The sequence is that of Phosphopantetheine adenylyltransferase from Paracoccus denitrificans (strain Pd 1222).